A 130-amino-acid polypeptide reads, in one-letter code: MYKAETRGITVTVEPRFVEEESSPGESRYFFAYTVEIVNNGSEQVQLRSRHWRIIDGRGACQEVRGAGVVGKQPVLEPGESFSYTSGCPLTTPDGLMAGSYTMSTVGGESFEAEIPAFSLDSPHLRRVVH.

The 125-residue stretch at 3–127 folds into the ApaG domain; the sequence is KAETRGITVT…FSLDSPHLRR (125 aa).

The sequence is that of Protein ApaG from Methylorubrum populi (strain ATCC BAA-705 / NCIMB 13946 / BJ001) (Methylobacterium populi).